A 518-amino-acid polypeptide reads, in one-letter code: Mitochondrial 2-methylisocitrate lyase (518 aa).

This sequence belongs to the isocitrate lyase/PEP mutase superfamily. Isocitrate lyase family.

The protein resides in the mitochondrion matrix. The protein localises to the cytoplasm. The enzyme catalyses (2S,3R)-3-hydroxybutane-1,2,3-tricarboxylate = pyruvate + succinate. It participates in organic acid metabolism; propanoate degradation. Its function is as follows. Catalyzes the formation of pyruvate and succinate from 2-methylisocitrate during the metabolism of endogenous propionyl-CoA. Does not act on isocitrate. This Schizosaccharomyces pombe (strain 972 / ATCC 24843) (Fission yeast) protein is Mitochondrial 2-methylisocitrate lyase (icl2).